The following is a 164-amino-acid chain: Phosphopantetheine adenylyltransferase (164 aa).

Residue Ser-9 coordinates substrate. ATP-binding positions include 9–10 (SF) and His-17. Substrate is bound by residues Lys-41, Leu-73, and Lys-87. Residues 88–90 (GLR), Glu-98, and 122–128 (YSYLSSS) contribute to the ATP site.

Belongs to the bacterial CoaD family. Homohexamer. Mg(2+) serves as cofactor.

It localises to the cytoplasm. It catalyses the reaction (R)-4'-phosphopantetheine + ATP + H(+) = 3'-dephospho-CoA + diphosphate. Its pathway is cofactor biosynthesis; coenzyme A biosynthesis; CoA from (R)-pantothenate: step 4/5. Functionally, reversibly transfers an adenylyl group from ATP to 4'-phosphopantetheine, yielding dephospho-CoA (dPCoA) and pyrophosphate. In Rhodococcus jostii (strain RHA1), this protein is Phosphopantetheine adenylyltransferase.